The chain runs to 148 residues: Endoribonuclease YbeY (148 aa).

Residues histidine 113, histidine 117, and histidine 123 each contribute to the Zn(2+) site.

Belongs to the endoribonuclease YbeY family. The cofactor is Zn(2+).

It localises to the cytoplasm. Its function is as follows. Single strand-specific metallo-endoribonuclease involved in late-stage 70S ribosome quality control and in maturation of the 3' terminus of the 16S rRNA. This is Endoribonuclease YbeY from Borrelia recurrentis (strain A1).